A 185-amino-acid chain; its full sequence is Putative lipoprotein LprB (185 aa).

A signal peptide spans 1–24; that stretch reads MRRKVRRLTLAVSALVALFPAVAG. Cys25 carries the N-palmitoyl cysteine lipid modification. The S-diacylglycerol cysteine moiety is linked to residue Cys25. The tract at residues 26–50 is disordered; it reads SDSGDNKPGATIPSTPANAEGRHGP.

The protein resides in the cell membrane. This Mycobacterium tuberculosis (strain CDC 1551 / Oshkosh) protein is Putative lipoprotein LprB (lprB).